A 424-amino-acid polypeptide reads, in one-letter code: MEPLDTLNLWMERARDRARAISFGRFLWHRFLDDRLFQAAAALAYTTVFALVPLAIVVFGVLSAFPVFDRWSDQLSDYVFSNFVPNAARAAEGYLRQFSASAGQLTAAGFIALVVSLLITLNSVEETFNQIWRVGSTRPKLTRFLVYWTVLTLGAMLAAASLAVSARVFAMPLFGTQEGRWLAELALRLAPILIEFVCITLMFRVVPHHTVKWRHAVPGAILAAVILELVKWGIGAYLGSFQSYQKLYGTVAFVPILLLWIYLCWVAVLLGASLSSSMAAFRYQPVELRLPQGYEFYGLLRLLGRFHHARAKGKGLADDEILRLEPMLTDSLLQDLACNLQEIGLLRRDERGEWLLSRDLDQVSLADLYECTQLRIPVAEQHLPYRDDSLGRAALAALDDLRLPLRERLKRKVSDIYTDSGDMP.

6 helical membrane-spanning segments follow: residues 48–68, 101–121, 144–164, 181–201, 216–236, and 251–271; these read VFAL…FPVF, SAGQ…LITL, FLVY…SLAV, WLAE…CITL, AVPG…GIGA, and VAFV…VLLG.

This sequence belongs to the UPF0761 family.

It localises to the cell inner membrane. The protein is UPF0761 membrane protein Smlt0865 of Stenotrophomonas maltophilia (strain K279a).